We begin with the raw amino-acid sequence, 155 residues long: MSNPIVTSLKILASNTAADKGLEVVELKFNPHSKPITIQVQIQKKPKKDVSLDDCAQFSELISETIELSKLINEPYLLEISSPGLGDLLQTDKDFKTFKGFPIEVLFKNNENTKLTKSGLLHERSKEYLLINIKGRISKIPREDVITVQLTSPTG.

Belongs to the RimP family.

The protein localises to the cytoplasm. In terms of biological role, required for maturation of 30S ribosomal subunits. The protein is Ribosome maturation factor RimP of Prochlorococcus marinus (strain MIT 9211).